Here is a 336-residue protein sequence, read N- to C-terminus: HTH-type transcriptional repressor PurR (336 aa).

Positions 2 to 56 (ATIKDVAKMAGVSTTTVSHVINKTRFVAKDTEEAVLSAIKQLNYSPSAVARSLKV) constitute an HTH lacI-type domain. The segment at residues 4-23 (IKDVAKMAGVSTTTVSHVIN) is a DNA-binding region (H-T-H motif). A DNA-binding region spans residues 48-56 (SAVARSLKV). Positions 73, 188, 190, 219, and 273 each coordinate hypoxanthine.

Homodimer.

It functions in the pathway purine metabolism; purine nucleotide biosynthesis [regulation]. In terms of biological role, is the main repressor of the genes involved in the de novo synthesis of purine nucleotides, regulating purB, purC, purEK, purF, purHD, purL, purMN and guaBA expression. PurR is allosterically activated to bind its cognate DNA by binding the purine corepressors, hypoxanthine or guanine, thereby effecting transcription repression. The protein is HTH-type transcriptional repressor PurR of Haemophilus influenzae (strain PittGG).